Consider the following 349-residue polypeptide: D-alanine--D-alanine ligase (349 aa).

The region spanning 133–335 (QVLESATTIP…YSVLIEELVS (203 aa)) is the ATP-grasp domain. 163–218 (EEKLIYPVFVKPANMGSSVGISKAENRTDLKQAIALALKYDSRVLIEQGVDAREIE) serves as a coordination point for ATP. Mg(2+)-binding residues include D289, E302, and N304.

The protein belongs to the D-alanine--D-alanine ligase family. The cofactor is Mg(2+). Requires Mn(2+) as cofactor.

It localises to the cytoplasm. It catalyses the reaction 2 D-alanine + ATP = D-alanyl-D-alanine + ADP + phosphate + H(+). It participates in cell wall biogenesis; peptidoglycan biosynthesis. Cell wall formation. The sequence is that of D-alanine--D-alanine ligase from Streptococcus mutans serotype c (strain ATCC 700610 / UA159).